Reading from the N-terminus, the 818-residue chain is MAATEAAAADSAGPAPGVPATPASTRGAAAASSPWRPPESRLQGSRPRPARARAAAPVPPARELIQPTVSELSRAVRTNILCTVRGCGKILPNSPALNMHLVKSHRLQDGIVNPTIRKDLTTAPKFYCCPIKGCPRGPDRPFSQFSLVKQHFMKMHAEKKHKCSKCSNSYGTEWDLKRHEEDCGKTFQCTCGCPYASRTALQSHIYRTGHEIPAEHRDPPSKKRKMESYLQNQKLSSKTTEPLSDQAAPRQDAAEPDAPEVKPAASLEDSCSAHTKKQSVATPPRCPQKLLLPKPKVALVKLPVMQFSPVPVFVPTAESSAQPVVLGVDHSSAAGTVHLVPLSVGALILSLDSEACSLKESLPLSKIISPVVEPMNTGVQVNLGKSLCSPLQEVGSVCQRTSISSSNVQTDLTYASANLIPSAQWLGPDSSVSSCSQTDLSFDSQVSLPVSVHTQTLVPSSKVTSSIAAQTDAFIDACFQPGGVSRETQTSRMQNRTNDSVPVGHTGLCGDIFESVHASYSVPTDTIMSSSLVAETGTHGLPPQSDPKILGQVMEKSAPVLNFSTQNGLLPAHTMTDNQTQTIDLLSDLENILSSNLPGQTLDNRSLLSDTNPGPDAQLPAGSAQNSGIDFDIEEFLSASNIQTQTEESELSSMSTEPVLESLDIETQTDVLLSDPSTQPYGFRAGSGFLGLEMFDTQTQTDLNFFLDSSPHLPLGSILKHSSFSMSTDSSDTETQTEGACPARHLPALESKVQLSSTETQTMSSGFEPLGNLFLTSNETQTAMDDFLLADLAWNTMESQFSSVETQTCAELHAVSSF.

Residues 1–34 (MAATEAAAADSAGPAPGVPATPASTRGAAAASSP) show a composition bias toward low complexity. Residues 1-62 (MAATEAAAAD…RAAAPVPPAR (62 aa)) form a disordered region. Residues 80 to 105 (ILCTVRGCGKILPNSPALNMHLVKSH) form a C2H2-type 1 zinc finger. The C2H2-type 2; degenerate zinc finger occupies 161–181 (HKCSKCSNSYGTEWDLKRHEE). The span at 210-221 (HEIPAEHRDPPS) shows a compositional bias: basic and acidic residues. Disordered stretches follow at residues 210–284 (HEIP…ATPP) and 603–625 (DNRS…GSAQ). A required for formation of RAD51 foci region spans residues 219–437 (PPSKKRKMES…PDSSVSSCSQ (219 aa)). Polar residues-rich tracts occupy residues 229–243 (YLQN…TEPL) and 603–612 (DNRSLLSDTN).

As to quaternary structure, interacts via its C-terminus with ATM. Interacts with DYNLL; this interaction inhibits ATMIN transcriptional activity and hence may play a role in a feedback loop whereby DYNLL1 inhibits transactivation of its own promoter by ATMIN. ATMIN.

The protein localises to the nucleus. Transcription factor. Plays a crucial role in cell survival and RAD51 foci formation in response to methylating DNA damage. Involved in regulating the activity of ATM in the absence of DNA damage. May play a role in stabilizing ATM. Binds to the DYNLL1 promoter and activates its transcription. The chain is ATM interactor from Mus musculus (Mouse).